We begin with the raw amino-acid sequence, 662 residues long: Protein associated with UVRAG as autophagy enhancer (662 aa).

Disordered regions lie at residues 1–34 and 58–131; these read MVSQ…RLLN and DVQQ…SLSS. A compositionally biased stretch (low complexity) spans 58 to 71; that stretch reads DVQQQPQDLQSQVP. Residues 100–113 show a composition bias toward polar residues; that stretch reads AETTLSEDTTDSVG. Residues 114-131 are compositionally biased toward low complexity; it reads SASPHGSSEKSSSFSLSS. Ser157 bears the Phosphoserine; by MTOR mark. The interaction with UVRAG stretch occupies residues 196 to 235; it reads EVFVLPVDVEKENAHFYVADMIISAMEKMKCNILSQQQTE. N6-acetyllysine occurs at positions 483, 523, 533, 573, and 633.

As to quaternary structure, interacts with UVRAG; the interaction is direct and promotes association with the PI3K/PI3KC3 and HOPS complexes. Interacts with STX17. Phosphorylated by MTOR at Ser-157 under nutrient-rich conditions. Phosphorylation prevents acetylation by KAT5/TIP60 and impairs RUBCNL/PACER function and autophagosome maturation. Under autophagy induction, Phosphorylation by MTOR is repressed, enabling acetylation by KAT5/TIP60. Post-translationally, acetylated by KAT5/TIP60 under autophagy induction, promoting autophagosome maturation and lipid metabolism. Acetylation is prevented by phosphorylation by MTOR. Lys-483 and Lys-573 constitute the key sites for tuning function in autophagy. Expressed weakly in cervical carcinoma cell lines.

The protein localises to the cytoplasmic vesicle. Its subcellular location is the autophagosome membrane. Functionally, regulator of autophagy that promotes autophagosome maturation by facilitating the biogenesis of phosphatidylinositol 3-phosphate (PtdIns(3)P) in late steps of autophagy. Acts by antagonizing RUBCN, thereby stimulating phosphatidylinositol 3-kinase activity of the PI3K/PI3KC3 complex. Following anchorage to the autophagosomal SNARE STX17, promotes the recruitment of PI3K/PI3KC3 and HOPS complexes to the autophagosome to regulate the fusion specificity of autophagosomes with late endosomes/lysosomes. Binds phosphoinositides phosphatidylinositol 3-phosphate (PtdIns(3)P), 4-phosphate (PtdIns(4)P) and 5-phosphate (PtdIns(5)P). In addition to its role in autophagy, acts as a regulator of lipid and glycogen homeostasis. May act as a tumor suppressor. This Homo sapiens (Human) protein is Protein associated with UVRAG as autophagy enhancer.